Reading from the N-terminus, the 474-residue chain is Aspartyl/glutamyl-tRNA(Asn/Gln) amidotransferase subunit B (474 aa).

The protein belongs to the GatB/GatE family. GatB subfamily. As to quaternary structure, heterotrimer of A, B and C subunits.

The enzyme catalyses L-glutamyl-tRNA(Gln) + L-glutamine + ATP + H2O = L-glutaminyl-tRNA(Gln) + L-glutamate + ADP + phosphate + H(+). It catalyses the reaction L-aspartyl-tRNA(Asn) + L-glutamine + ATP + H2O = L-asparaginyl-tRNA(Asn) + L-glutamate + ADP + phosphate + 2 H(+). Allows the formation of correctly charged Asn-tRNA(Asn) or Gln-tRNA(Gln) through the transamidation of misacylated Asp-tRNA(Asn) or Glu-tRNA(Gln) in organisms which lack either or both of asparaginyl-tRNA or glutaminyl-tRNA synthetases. The reaction takes place in the presence of glutamine and ATP through an activated phospho-Asp-tRNA(Asn) or phospho-Glu-tRNA(Gln). The sequence is that of Aspartyl/glutamyl-tRNA(Asn/Gln) amidotransferase subunit B from Wolbachia sp. subsp. Brugia malayi (strain TRS).